The following is a 135-amino-acid chain: UPF0738 protein Aflv_2116 (135 aa).

The protein belongs to the UPF0738 family.

The chain is UPF0738 protein Aflv_2116 from Anoxybacillus flavithermus (strain DSM 21510 / WK1).